The sequence spans 506 residues: Glutamate--tRNA ligase (506 aa).

Residues 21–31 (PSPTGIPHVGM) carry the 'HIGH' region motif. The 'KMSKS' region motif lies at 265–269 (KLSKR). Residue Lys268 coordinates ATP.

Belongs to the class-I aminoacyl-tRNA synthetase family. Glutamate--tRNA ligase type 1 subfamily. As to quaternary structure, monomer.

It is found in the cytoplasm. It carries out the reaction tRNA(Glu) + L-glutamate + ATP = L-glutamyl-tRNA(Glu) + AMP + diphosphate. Catalyzes the attachment of glutamate to tRNA(Glu) in a two-step reaction: glutamate is first activated by ATP to form Glu-AMP and then transferred to the acceptor end of tRNA(Glu). The polypeptide is Glutamate--tRNA ligase (Bifidobacterium adolescentis (strain ATCC 15703 / DSM 20083 / NCTC 11814 / E194a)).